Reading from the N-terminus, the 330-residue chain is Beta-ketoacyl-[acyl-carrier-protein] synthase III (330 aa).

Catalysis depends on residues cysteine 114 and histidine 254. An ACP-binding region spans residues glutamine 255–arginine 259. Residue asparagine 284 is part of the active site.

The protein belongs to the thiolase-like superfamily. FabH family. As to quaternary structure, homodimer.

It localises to the cytoplasm. It carries out the reaction malonyl-[ACP] + acetyl-CoA + H(+) = 3-oxobutanoyl-[ACP] + CO2 + CoA. It functions in the pathway lipid metabolism; fatty acid biosynthesis. In terms of biological role, catalyzes the condensation reaction of fatty acid synthesis by the addition to an acyl acceptor of two carbons from malonyl-ACP. Catalyzes the first condensation reaction which initiates fatty acid synthesis and may therefore play a role in governing the total rate of fatty acid production. Possesses both acetoacetyl-ACP synthase and acetyl transacylase activities. Its substrate specificity determines the biosynthesis of branched-chain and/or straight-chain of fatty acids. The polypeptide is Beta-ketoacyl-[acyl-carrier-protein] synthase III (Roseiflexus castenholzii (strain DSM 13941 / HLO8)).